Here is a 232-residue protein sequence, read N- to C-terminus: UPF0758 protein EF_2926 (232 aa).

The 123-residue stretch at 107-229 (KVTSSQQVAQ…YISLREENFF (123 aa)) folds into the MPN domain. 3 residues coordinate Zn(2+): H178, H180, and D191. A JAMM motif motif is present at residues 178–191 (HNHPSGNPTPSPQD).

Belongs to the UPF0758 family.

The chain is UPF0758 protein EF_2926 from Enterococcus faecalis (strain ATCC 700802 / V583).